Consider the following 126-residue polypeptide: Ribosome-binding factor A (126 aa).

It belongs to the RbfA family. As to quaternary structure, monomer. Binds 30S ribosomal subunits, but not 50S ribosomal subunits or 70S ribosomes.

The protein localises to the cytoplasm. Functionally, one of several proteins that assist in the late maturation steps of the functional core of the 30S ribosomal subunit. Associates with free 30S ribosomal subunits (but not with 30S subunits that are part of 70S ribosomes or polysomes). Required for efficient processing of 16S rRNA. May interact with the 5'-terminal helix region of 16S rRNA. This Azoarcus sp. (strain BH72) protein is Ribosome-binding factor A.